The following is a 401-amino-acid chain: Protein zntC (401 aa).

3 helical membrane passes run 33 to 53 (GGLIAGIFVLTLTASFVPWFL), 61 to 81 (LVSVVSILTCLSAGVIIGAGF), and 114 to 134 (ITIVTMFALICVDKILVSGGL). The tract at residues 141-247 (NHMDLSQHNH…SHKDEKDSEK (107 aa)) is disordered. Acidic residues predominate over residues 167 to 184 (GDDDDDDVNEDQEEDSTK). Over residues 200-209 (HNSSNSSSNG) the composition is skewed to low complexity. The span at 212–225 (HGLKKKKKSKKEHG) shows a compositional bias: basic residues. The span at 226 to 247 (HGHNHDHSSNGHSHKDEKDSEK) shows a compositional bias: basic and acidic residues. 5 consecutive transmembrane segments (helical) span residues 256 to 276 (AWVFLVALSLHSIFDGLGLGS), 285 to 305 (GLLIAVLAHKFLDGLVLGIAI), 316 to 336 (CIALVFAAAMTPLGIGIGMAI), 351 to 371 (GIILSITCGSFIYISLIELLP), and 381 to 401 (KLKLAVAFLGYSVMAILALWV).

This sequence belongs to the ZIP transporter (TC 2.A.5) family.

Its subcellular location is the membrane. Its function is as follows. May transport divalent cations. May participate, with dstA, in the regulation of the differentiation of stalk cells during development. The protein is Protein zntC (zntC) of Dictyostelium discoideum (Social amoeba).